Consider the following 259-residue polypeptide: tRNA pseudouridine synthase A (259 aa).

Asp51 serves as the catalytic Nucleophile. Tyr109 is a substrate binding site.

It belongs to the tRNA pseudouridine synthase TruA family. In terms of assembly, homodimer.

The catalysed reaction is uridine(38/39/40) in tRNA = pseudouridine(38/39/40) in tRNA. Functionally, formation of pseudouridine at positions 38, 39 and 40 in the anticodon stem and loop of transfer RNAs. This chain is tRNA pseudouridine synthase A, found in Nitrosococcus oceani (strain ATCC 19707 / BCRC 17464 / JCM 30415 / NCIMB 11848 / C-107).